A 550-amino-acid polypeptide reads, in one-letter code: CTP synthase (550 aa).

Residues 1–270 are amidoligase domain; the sequence is MTKFVFVTGG…DRLICEELRL (270 aa). Serine 13 is a binding site for CTP. UTP is bound at residue serine 13. Residues 14–19 and aspartate 71 contribute to the ATP site; that span reads SLGKGI. Positions 71 and 144 each coordinate Mg(2+). CTP-binding positions include 151-153, 191-196, and lysine 227; these read DIE and KTKPTQ. UTP-binding positions include 191–196 and lysine 227; that span reads KTKPTQ. The Glutamine amidotransferase type-1 domain maps to 295–547; sequence TIGMVGKYVD…VEAALASQQR (253 aa). Residue glycine 356 coordinates L-glutamine. The Nucleophile; for glutamine hydrolysis role is filled by cysteine 383. Residues 384-387, glutamate 407, and arginine 473 contribute to the L-glutamine site; that span reads LGMQ. Catalysis depends on residues histidine 520 and glutamate 522.

Belongs to the CTP synthase family. In terms of assembly, homotetramer.

It catalyses the reaction UTP + L-glutamine + ATP + H2O = CTP + L-glutamate + ADP + phosphate + 2 H(+). The catalysed reaction is L-glutamine + H2O = L-glutamate + NH4(+). It carries out the reaction UTP + NH4(+) + ATP = CTP + ADP + phosphate + 2 H(+). The protein operates within pyrimidine metabolism; CTP biosynthesis via de novo pathway; CTP from UDP: step 2/2. With respect to regulation, allosterically activated by GTP, when glutamine is the substrate; GTP has no effect on the reaction when ammonia is the substrate. The allosteric effector GTP functions by stabilizing the protein conformation that binds the tetrahedral intermediate(s) formed during glutamine hydrolysis. Inhibited by the product CTP, via allosteric rather than competitive inhibition. In terms of biological role, catalyzes the ATP-dependent amination of UTP to CTP with either L-glutamine or ammonia as the source of nitrogen. Regulates intracellular CTP levels through interactions with the four ribonucleotide triphosphates. This Cupriavidus taiwanensis (strain DSM 17343 / BCRC 17206 / CCUG 44338 / CIP 107171 / LMG 19424 / R1) (Ralstonia taiwanensis (strain LMG 19424)) protein is CTP synthase.